Consider the following 344-residue polypeptide: MLQALLDSKDFLALTLANPETLGDEFSFTLGEHTRVEVWDTGVIVFEPVQAQGKDVILSCGVHGNETAPIELCNTLIKQLLQQKIIAKQRTLFLIGNPLAINNGTRIIDENMNRLFSGEHSNPPGLVNPERVRAKKLEAYVDRFFKGAAAGRQRIHYDLHTAMRASKHEKFAIYPYRPGRAYSAEQIMFLAASGVDTVLFHHEPTTTFSYFSSEQYGADAFTIELGKVYPMGQNDMTRFIAAQEMFMRLITDKPLALEPFSADKVNLYQVCRVINKHFDDFEFTFATDVENFRSFPKGFVLAREGGQEIKVEQECESIVFPNAKVPIGNRTVICLIPSVAPDVR.

Positions 63, 66, and 160 each coordinate Zn(2+). E224 is an active-site residue.

Belongs to the AspA/AstE family. Succinylglutamate desuccinylase subfamily. Zn(2+) is required as a cofactor.

The catalysed reaction is N-succinyl-L-glutamate + H2O = L-glutamate + succinate. It participates in amino-acid degradation; L-arginine degradation via AST pathway; L-glutamate and succinate from L-arginine: step 5/5. Transforms N(2)-succinylglutamate into succinate and glutamate. In Shewanella sp. (strain MR-4), this protein is Succinylglutamate desuccinylase.